A 164-amino-acid polypeptide reads, in one-letter code: V-type proton ATPase subunit c' (164 aa).

At 1–14 (MSTQLASNIYAPLY) the chain is on the vacuolar side. A helical transmembrane segment spans residues 15 to 37 (APFFGFAGCAAAMVLSCLGAAIG). The Cytoplasmic portion of the chain corresponds to 38 to 59 (TAKSGIGIAGIGTFKPELIMKS). Residues 60–80 (LIPVVMSGILAIYGLVVAVLI) traverse the membrane as a helical segment. Over 81–98 (AGNLSPTEDYTLFNGFMH) the chain is Vacuolar. A helical membrane pass occupies residues 99 to 120 (LSCGLCVGFACLSSGYAIGMVG). The Cytoplasmic segment spans residues 121-132 (DVGVRKYMHQPR). The helical transmembrane segment at 133–158 (LFVGIVLILIFSEVLGLYGMIVALIL) threads the bilayer. The Vacuolar segment spans residues 159 to 164 (NTRGSE).

Belongs to the V-ATPase proteolipid subunit family. In terms of assembly, V-ATPase is a heteromultimeric enzyme composed of a peripheral catalytic V1 complex (components A to H) attached to an integral membrane V0 proton pore complex (components: a, c, c', c'', d, e, f and VOA1). The decameric c-ring forms the proton-conducting pore, and is composed of eight proteolipid subunits c, one subunit c' and one subunit c''.

The protein resides in the vacuole membrane. Its function is as follows. Proton-conducting pore forming subunit of the V0 complex of vacuolar(H+)-ATPase (V-ATPase), a multisubunit enzyme composed of a peripheral complex (V1) that hydrolyzes ATP and a membrane integral complex (V0) that translocates protons. V-ATPase is responsible for acidifying and maintaining the pH of intracellular compartments. This is V-type proton ATPase subunit c' (VMA11) from Saccharomyces cerevisiae (strain ATCC 204508 / S288c) (Baker's yeast).